The following is a 396-amino-acid chain: Beta-peptidyl aminopeptidase BapA (396 aa).

The signal sequence occupies residues 1-21; it reads MHYLKFPAIIAGMLLAGAASA. Ser-271 (nucleophile) is an active-site residue. Active-site proton donor/acceptor residues include Ser-309 and Asp-311.

The protein belongs to the peptidase S58 family. In terms of assembly, heterooctamer of 4 heterodimers ((alpha:beta)4); each heterodimer is composed of an alpha subunit and a beta subunit processed from the same precursor. Autoproteolytic processing to generate the alpha and beta subunit is required for self-activation and is proposed to use a similar mechanism as substrate cleavage.

It is found in the periplasm. The catalysed reaction is Cleaves N-terminal beta-homoamino acids from peptides composed of 2 to 6 amino acids.. With respect to regulation, inhibited by AEBSF (4-(2-aminoethyl)benzenesulfonyl fluoride, Pefabloc SC). Its function is as follows. Beta-aminopeptidase that can cleave synthetic beta-peptides which consist of backbone-elongated beta-amino acid residues that are not processed by common proteolytic enzymes. Can cleave the beta-peptides beta-homoVal-beta-homoAla-beta-homoLeu and beta-homoAla-beta-homoLeu. Requires a beta-amino acid at the N-terminus of peptide substrates and cleaves the peptide bond between the N-terminal beta-amino acid and the amino acid at the second position of tripeptidic substrates of the general structure H-betahXaa-Ile-betahTyr-OH according to the following preferences with regard to the side chain of the N-terminal beta-amino acid: aliphatic and aromatic &gt; OH-containing &gt; hydrogen, basic and polar. beta-homoVal-beta-homoAla-beta-homoLeu and beta-homoAla-beta-homoLeu. This is Beta-peptidyl aminopeptidase BapA from Sphingosinicella microcystinivorans.